Consider the following 292-residue polypeptide: 2-hydroxy-3-oxopropionate reductase (292 aa).

NAD(+) is bound by residues 4 to 18 and Ser94; that span reads GFIG…MAIN. Residue Lys169 is part of the active site. An NAD(+)-binding site is contributed by Lys237.

The protein belongs to the HIBADH-related family.

It carries out the reaction (R)-glycerate + NADP(+) = 2-hydroxy-3-oxopropanoate + NADPH + H(+). The enzyme catalyses (R)-glycerate + NAD(+) = 2-hydroxy-3-oxopropanoate + NADH + H(+). The protein operates within organic acid metabolism; glycolate degradation; 3-phospho-D-glycerate from glycolate: step 3/4. This chain is 2-hydroxy-3-oxopropionate reductase (glxR), found in Escherichia coli (strain K12).